The primary structure comprises 346 residues: tRNA N6-adenosine threonylcarbamoyltransferase (346 aa).

Positions 111 and 115 each coordinate Fe cation. Substrate is bound by residues 134–138, aspartate 167, glycine 180, and asparagine 277; that span reads LVSGG. Position 305 (aspartate 305) interacts with Fe cation.

It belongs to the KAE1 / TsaD family. Requires Fe(2+) as cofactor.

Its subcellular location is the cytoplasm. It carries out the reaction L-threonylcarbamoyladenylate + adenosine(37) in tRNA = N(6)-L-threonylcarbamoyladenosine(37) in tRNA + AMP + H(+). Functionally, required for the formation of a threonylcarbamoyl group on adenosine at position 37 (t(6)A37) in tRNAs that read codons beginning with adenine. Is involved in the transfer of the threonylcarbamoyl moiety of threonylcarbamoyl-AMP (TC-AMP) to the N6 group of A37, together with TsaE and TsaB. TsaD likely plays a direct catalytic role in this reaction. The polypeptide is tRNA N6-adenosine threonylcarbamoyltransferase (Bordetella pertussis (strain Tohama I / ATCC BAA-589 / NCTC 13251)).